We begin with the raw amino-acid sequence, 248 residues long: MPSRTITRLVRLYGGTPLVELPPIFLAPALQFPSLHFASFQCLKFSTTPAPGLKLDLSKHRGVSAIHRTGPRYPLSVSKYPLPRPVKPKEQEKRPSNPKHGLWGFFGPDRKPIPTPEEEYAHGRAWSIQELRQKSWDDLHKLYWLCVKERNRIATARYERQRLQAGYGDYESNNRDKTVRGTQQSIKQVLRERWYAWEDARQLYESGEYSPADAQVMEAEAYAYEPPALDVEEPKGEASDSVKTPPSS.

2 disordered regions span residues 77–107 (VSKY…GFFG) and 223–248 (AYEP…PPSS).

This sequence belongs to the universal ribosomal protein uL29 family. In terms of assembly, component of the mitochondrial large ribosomal subunit. Mature mitochondrial ribosomes consist of a small (37S) and a large (54S) subunit. The 37S subunit contains at least 33 different proteins and 1 molecule of RNA (15S). The 54S subunit contains at least 45 different proteins and 1 molecule of RNA (21S).

It is found in the mitochondrion. The sequence is that of Large ribosomal subunit protein uL29m (MRPL4) from Ajellomyces capsulatus (strain NAm1 / WU24) (Darling's disease fungus).